A 178-amino-acid chain; its full sequence is Probable chorismate pyruvate-lyase (178 aa).

Residues arginine 72, leucine 110, and glutamate 169 each contribute to the substrate site.

This sequence belongs to the UbiC family.

It is found in the cytoplasm. The enzyme catalyses chorismate = 4-hydroxybenzoate + pyruvate. It functions in the pathway cofactor biosynthesis; ubiquinone biosynthesis. Functionally, removes the pyruvyl group from chorismate, with concomitant aromatization of the ring, to provide 4-hydroxybenzoate (4HB) for the ubiquinone pathway. In Nitrosomonas eutropha (strain DSM 101675 / C91 / Nm57), this protein is Probable chorismate pyruvate-lyase.